We begin with the raw amino-acid sequence, 299 residues long: Pyridoxal 5'-phosphate synthase subunit PdxS (299 aa).

Residue D29 participates in D-ribose 5-phosphate binding. K86 acts as the Schiff-base intermediate with D-ribose 5-phosphate in catalysis. Residue G158 participates in D-ribose 5-phosphate binding. Residue R170 participates in D-glyceraldehyde 3-phosphate binding. D-ribose 5-phosphate is bound by residues G219 and 240-241 (GS).

It belongs to the PdxS/SNZ family. As to quaternary structure, in the presence of PdxT, forms a dodecamer of heterodimers.

The catalysed reaction is aldehydo-D-ribose 5-phosphate + D-glyceraldehyde 3-phosphate + L-glutamine = pyridoxal 5'-phosphate + L-glutamate + phosphate + 3 H2O + H(+). It participates in cofactor biosynthesis; pyridoxal 5'-phosphate biosynthesis. Functionally, catalyzes the formation of pyridoxal 5'-phosphate from ribose 5-phosphate (RBP), glyceraldehyde 3-phosphate (G3P) and ammonia. The ammonia is provided by the PdxT subunit. Can also use ribulose 5-phosphate and dihydroxyacetone phosphate as substrates, resulting from enzyme-catalyzed isomerization of RBP and G3P, respectively. The protein is Pyridoxal 5'-phosphate synthase subunit PdxS of Mycobacterium bovis (strain ATCC BAA-935 / AF2122/97).